A 106-amino-acid polypeptide reads, in one-letter code: Nucleoid-associated protein XC_3243 (106 aa).

Positions 82–106 are disordered; sequence DAESKERMGSATAGMQLPPGMKLPF.

The protein belongs to the YbaB/EbfC family. As to quaternary structure, homodimer.

The protein localises to the cytoplasm. The protein resides in the nucleoid. Functionally, binds to DNA and alters its conformation. May be involved in regulation of gene expression, nucleoid organization and DNA protection. This Xanthomonas campestris pv. campestris (strain 8004) protein is Nucleoid-associated protein XC_3243.